A 639-amino-acid polypeptide reads, in one-letter code: Chaperone protein DnaK (639 aa).

Thr-198 carries the phosphothreonine; by autocatalysis modification. The tract at residues 605-624 is disordered; it reads SQAQGGAETNAGKQANAAAD.

It belongs to the heat shock protein 70 family.

Functionally, acts as a chaperone. The chain is Chaperone protein DnaK from Shewanella putrefaciens (strain CN-32 / ATCC BAA-453).